The chain runs to 353 residues: Farnesyl pyrophosphate synthase (353 aa).

3 residues coordinate isopentenyl diphosphate: lysine 57, arginine 60, and glutamine 96. Position 57 is an N6-(2-hydroxyisobutyryl)lysine; alternate (lysine 57). Lysine 57 carries the post-translational modification N6-acetyllysine; alternate. Residues aspartate 103 and aspartate 107 each contribute to the Mg(2+) site. Arginine 112 serves as a coordination point for dimethylallyl diphosphate. Isopentenyl diphosphate is bound at residue arginine 113. The dimethylallyl diphosphate site is built by lysine 200, threonine 201, glutamine 240, lysine 257, and lysine 266.

The protein belongs to the FPP/GGPP synthase family. As to quaternary structure, homodimer. Interacts with RSAD2. The cofactor is Mg(2+). As to expression, testis, liver, kidney, brain and adrenal gland.

It localises to the cytoplasm. It catalyses the reaction isopentenyl diphosphate + dimethylallyl diphosphate = (2E)-geranyl diphosphate + diphosphate. It carries out the reaction isopentenyl diphosphate + (2E)-geranyl diphosphate = (2E,6E)-farnesyl diphosphate + diphosphate. The protein operates within isoprenoid biosynthesis; farnesyl diphosphate biosynthesis; farnesyl diphosphate from geranyl diphosphate and isopentenyl diphosphate: step 1/1. It functions in the pathway isoprenoid biosynthesis; geranyl diphosphate biosynthesis; geranyl diphosphate from dimethylallyl diphosphate and isopentenyl diphosphate: step 1/1. Inactivated by interferon-induced RSAD2. This inactivation may result of disruption of lipid rafts at the plasma membrane, and thus have an antiviral effect since many enveloped viruses need lipid rafts to bud efficiently out of the cell. Key enzyme in isoprenoid biosynthesis which catalyzes the formation of farnesyl diphosphate (FPP), a precursor for several classes of essential metabolites including sterols, dolichols, carotenoids, and ubiquinones. FPP also serves as substrate for protein farnesylation and geranylgeranylation. Catalyzes the sequential condensation of isopentenyl pyrophosphate with the allylic pyrophosphates, dimethylallyl pyrophosphate, and then with the resultant geranylpyrophosphate to the ultimate product farnesyl pyrophosphate. In Rattus norvegicus (Rat), this protein is Farnesyl pyrophosphate synthase (Fdps).